A 70-amino-acid chain; its full sequence is uncharacterized protein (70 aa).

Residues 50–70 (FYLLVFFIILWVSREAFFYLI) form a helical membrane-spanning segment.

Belongs to the M.jannaschii MJ0023/MJ0349/MJ1072/MJ1074/MJ1107/MJECL16 family.

The protein resides in the membrane. This is an uncharacterized protein from Methanocaldococcus jannaschii (strain ATCC 43067 / DSM 2661 / JAL-1 / JCM 10045 / NBRC 100440) (Methanococcus jannaschii).